Here is a 139-residue protein sequence, read N- to C-terminus: Putative pre-16S rRNA nuclease (139 aa).

This sequence belongs to the YqgF nuclease family.

It is found in the cytoplasm. Could be a nuclease involved in processing of the 5'-end of pre-16S rRNA. This Streptococcus pneumoniae (strain JJA) protein is Putative pre-16S rRNA nuclease.